Consider the following 502-residue polypeptide: Protein DETOXIFICATION 49 (502 aa).

Helical transmembrane passes span 41–61 (LPLILTGLLLYSRSMISMLFL), 75–95 (LALGFANITGYSLLSGLSIGM), 123–143 (LLCSLPISILWLNIKKILLFF), 153–173 (AEIFILFSLPDLILQSFLHPI), 190–210 (AFFAVLLHIPINYLLVSSLGL), 216–236 (ALGAIWTNVNLLGFLIIYIVF), 267–287 (VSVCLEWWWYEIMILLCGLLL), 293–313 (VASMGILIQTTALIYIFPSSL), 338–358 (RTGLSLSLGLGLLAMFFALMV), 372–392 (IVKLTSMVLPIIGLCELGNCP), 414–434 (LCCFYFVGMPVAVWLSFFSGF), and 439–459 (LWLGLFAAQGSCLISMLVVLA).

It belongs to the multi antimicrobial extrusion (MATE) (TC 2.A.66.1) family.

Its subcellular location is the membrane. This Arabidopsis thaliana (Mouse-ear cress) protein is Protein DETOXIFICATION 49.